A 226-amino-acid chain; its full sequence is LexA repressor (226 aa).

A DNA-binding region (H-T-H motif) is located at residues 28–48; that stretch reads RAEICQSLGFRSPNAAESHLR. Active-site for autocatalytic cleavage activity residues include serine 133 and lysine 170.

It belongs to the peptidase S24 family. As to quaternary structure, homodimer.

The enzyme catalyses Hydrolysis of Ala-|-Gly bond in repressor LexA.. Functionally, represses a number of genes involved in the response to DNA damage (SOS response), including recA and lexA. In the presence of single-stranded DNA, RecA interacts with LexA causing an autocatalytic cleavage which disrupts the DNA-binding part of LexA, leading to derepression of the SOS regulon and eventually DNA repair. The polypeptide is LexA repressor (Halorhodospira halophila (strain DSM 244 / SL1) (Ectothiorhodospira halophila (strain DSM 244 / SL1))).